Consider the following 430-residue polypeptide: tRNA(Ile)-lysidine synthase (430 aa).

Position 24–29 (24–29) interacts with ATP; that stretch reads SGGLDS.

It belongs to the tRNA(Ile)-lysidine synthase family.

Its subcellular location is the cytoplasm. It catalyses the reaction cytidine(34) in tRNA(Ile2) + L-lysine + ATP = lysidine(34) in tRNA(Ile2) + AMP + diphosphate + H(+). Its function is as follows. Ligates lysine onto the cytidine present at position 34 of the AUA codon-specific tRNA(Ile) that contains the anticodon CAU, in an ATP-dependent manner. Cytidine is converted to lysidine, thus changing the amino acid specificity of the tRNA from methionine to isoleucine. This Haemophilus influenzae (strain PittGG) protein is tRNA(Ile)-lysidine synthase.